The following is a 421-amino-acid chain: Subtilisin-like protease 2 (421 aa).

Positions 1–16 (MQLLNFGLLLLPFVAG) are cleaved as a signal peptide. Positions 17–122 (DLAPQPEPLL…VHPDQHVYLA (106 aa)) are excised as a propeptide. Residues 36–122 (QYIVTLKEGL…VHPDQHVYLA (87 aa)) enclose the Inhibitor I9 domain. Residues 131 to 421 (RWGLGYMSSK…ERKFTLPKYF (291 aa)) form the Peptidase S8 domain. Catalysis depends on charge relay system residues D169 and H201. 3 N-linked (GlcNAc...) asparagine glycosylation sites follow: N248, N261, and N348. The active-site Charge relay system is the S357. The N-linked (GlcNAc...) asparagine glycan is linked to N388.

Belongs to the peptidase S8 family.

It localises to the secreted. Secreted subtilisin-like serine protease with keratinolytic activity that contributes to pathogenicity. The chain is Subtilisin-like protease 2 (SUB2) from Trichophyton equinum (Horse ringworm fungus).